Reading from the N-terminus, the 93-residue chain is Small ribosomal subunit protein uS19 (93 aa).

The protein belongs to the universal ribosomal protein uS19 family.

Protein S19 forms a complex with S13 that binds strongly to the 16S ribosomal RNA. The protein is Small ribosomal subunit protein uS19 of Campylobacter concisus (strain 13826).